We begin with the raw amino-acid sequence, 342 residues long: C-X-C chemokine receptor type 6 (342 aa).

The Extracellular portion of the chain corresponds to 1–32; the sequence is MAEHDYHEDYGFSSFNDSSQEEHQDFLQFSKV. Residue N16 is glycosylated (N-linked (GlcNAc...) asparagine). A helical transmembrane segment spans residues 33-59; it reads FLPCMYLVVFVCGLVGNSLVLVISIFY. Residues 60 to 68 lie on the Cytoplasmic side of the membrane; that stretch reads HKLQSLTDV. Residues 69–89 traverse the membrane as a helical segment; that stretch reads FLVNLPLADLVFVCTLPFWAY. Residues 90 to 103 are Extracellular-facing; it reads AGIHEWVFGQVMCK. C102 and C180 are joined by a disulfide. The helical transmembrane segment at 104-125 threads the bilayer; sequence SLLGIYTINFYTSMLILTCITV. Residues 126–143 are Cytoplasmic-facing; it reads DRFIVVVKATKAYNQQAK. Residues 144 to 164 traverse the membrane as a helical segment; the sequence is RMTWGKVTSLLIWVISLLVSL. Topologically, residues 165–187 are extracellular; the sequence is PQIIYGNVFNLDKLICGYHDEAI. Residues 188 to 215 form a helical membrane-spanning segment; the sequence is STVVLATQMTLGFFLPLLTMIVCYSVII. Residues 216–231 lie on the Cytoplasmic side of the membrane; sequence KTLLHAGGFQKHRSLK. Residues 232–259 form a helical membrane-spanning segment; the sequence is IIFLVMAVFLLTQMPFNLMKFIRSTHWE. The Extracellular portion of the chain corresponds to 260 to 275; it reads YYAMTSFHYTIMVTEA. The helical transmembrane segment at 276-293 threads the bilayer; it reads IAYLRACLNPVLYAFVSL. Residues 294–342 lie on the Cytoplasmic side of the membrane; it reads KFRKNFWKLVKDIGCLPYLGVSHQWKSSEDNSKTFSASHNVEATSMFQL.

It belongs to the G-protein coupled receptor 1 family. Expressed in lymphoid tissues and activated T cells.

The protein resides in the cell membrane. Its function is as follows. Receptor for the C-X-C chemokine CXCL16. Used as a coreceptor by SIVs and by strains of HIV-2 and m-tropic HIV-1. The chain is C-X-C chemokine receptor type 6 (CXCR6) from Homo sapiens (Human).